A 398-amino-acid chain; its full sequence is O-methyltransferase mpaG (398 aa).

D264 is an S-adenosyl-L-methionine binding site. H306 (proton acceptor) is an active-site residue. Active-site residues include E335 and E362.

The protein belongs to the class I-like SAM-binding methyltransferase superfamily. Cation-independent O-methyltransferase family. COMT subfamily.

The protein localises to the cytoplasm. The protein resides in the cytosol. The catalysed reaction is (4E,8E)-10-(4,6-dihydroxy-7-methyl-3-oxo-1,3-dihydro-2-benzofuran-5-yl)-4,8-dimethyldeca-4,8-dienoate + S-adenosyl-L-methionine = (4E,8E)-10-(4-hydroxy-6-methoxy-7-methyl-3-oxo-1,3-dihydro-2-benzofuran-5-yl)-4,8-dimethyldeca-4,8-dienoate + S-adenosyl-L-homocysteine + H(+). It participates in secondary metabolite biosynthesis; terpenoid biosynthesis. In terms of biological role, O-methyltransferase; part of the gene cluster that mediates the biosynthesis of mycophenolic acid (MPA), the first isolated antibiotic natural product in the world obtained from a culture of Penicillium brevicompactum in 1893. MpaC methylates farnesyl-DHMP-3C (FDHMP-3C) to yield MFDHMP-3C. The first step of the pathway is the synthesis of 5-methylorsellinic acid (5MOA) by the cytosolic polyketide synthase mpaC. 5MOA is then converted to the phthalide compound 5,7-dihydroxy-4,6-dimethylphthalide (DHMP) by the endoplasmic reticulum-bound cytochrome P450 monooxygenase mpaDE. MpaDE first catalyzes hydroxylation of 5-MOA to 4,6-dihydroxy-2-(hydroxymethyl)-3-methylbenzoic acid (DHMB). MpaDE then acts as a lactone synthase that catalyzes the ring closure to convert DHMB into DHMP. The next step is the prenylation of DHMP by the Golgi apparatus-associated prenyltransferase mpaA to yield farnesyl-DHMP (FDHMP). The ER-bound oxygenase mpaB then mediates the oxidative cleavage the C19-C20 double bond in FDHMP to yield FDHMP-3C via a mycophenolic aldehyde intermediate. The O-methyltransferase mpaG catalyzes the methylation of FDHMP-3C to yield MFDHMP-3C. After the cytosolic methylation of FDHMP-3C, MFDHMP-3C enters into peroxisomes probably via free diffusion due to its low molecular weight. Upon a peroxisomal CoA ligation reaction, catalyzed by a beta-oxidation component enzyme acyl-CoA ligase ACL891, MFDHMP-3C-CoA would then be restricted to peroxisomes for the following beta-oxidation pathway steps. The peroxisomal beta-oxidation machinery than converts MFDHMP-3C-CoA into MPA_CoA, via a beta-oxidation chain-shortening process. Finally mpaH acts as a peroxisomal acyl-CoA hydrolase with high substrate specificity toward MPA-CoA to release the final product MPA. This Penicillium roqueforti (strain FM164) protein is O-methyltransferase mpaG.